A 907-amino-acid chain; its full sequence is Leucine-rich repeat-containing G-protein coupled receptor 5 (907 aa).

Residues Met-1–Gly-21 form the signal peptide. Residues Gly-22–Arg-561 lie on the Extracellular side of the membrane. The LRRNT domain occupies Pro-25–Val-66. Cystine bridges form between Cys-34-Cys-40 and Cys-38-Cys-52. Asn-63 and Asn-77 each carry an N-linked (GlcNAc...) asparagine glycan. LRR repeat units follow at residues Phe-67–Arg-90, Phe-91–Gly-112, Ser-115–Asn-136, Ser-139–Gly-160, Ser-163–Ser-184, Ala-187–Asn-208, Ser-211–Gly-232, Ser-235–Leu-256, Asn-258–Gly-279, Ser-282–His-303, Glu-306–Ala-328, Asn-329–Gln-350, Asn-353–Gln-374, Lys-375–Gln-396, Ser-399–Thr-420, and Ser-423–Thr-446. The N-linked (GlcNAc...) asparagine glycan is linked to Asn-208. Residues Cys-348 and Cys-373 are joined by a disulfide bond. Cys-479 and Cys-541 are joined by a disulfide. Asn-500 carries an N-linked (GlcNAc...) asparagine glycan. A helical transmembrane segment spans residues Ile-562–Val-582. At Phe-583–Lys-593 the chain is on the cytoplasmic side. Residues Leu-594–Ala-614 form a helical membrane-spanning segment. Over Gly-615 to His-638 the chain is Extracellular. A disulfide bridge links Cys-637 with Cys-712. The chain crosses the membrane as a helical span at residues Val-639–Ala-659. Over Leu-660–Lys-682 the chain is Cytoplasmic. A helical membrane pass occupies residues Val-683–Gly-703. The Extracellular segment spans residues Ser-704 to Thr-722. The helical transmembrane segment at Met-723 to Ala-743 threads the bilayer. The Cytoplasmic portion of the chain corresponds to Tyr-744–His-767. A helical transmembrane segment spans residues Ile-768–Ser-788. The Extracellular portion of the chain corresponds to Ser-789–Lys-802. Asn-792 carries N-linked (GlcNAc...) asparagine glycosylation. The helical transmembrane segment at Phe-803–Phe-823 threads the bilayer. The Cytoplasmic portion of the chain corresponds to Asn-824–Leu-907.

This sequence belongs to the G-protein coupled receptor 1 family. In terms of assembly, identified in a complex composed of RNF43, LGR5 and RSPO1. Also interacts with other R-spondin ligands, including RSPO2, RSPO3 and RSPO4. In terms of tissue distribution, expressed in skeletal muscle, placenta, spinal cord, and various region of brain. Expressed at the base of crypts in colonic and small mucosa stem cells. In premalignant cancer expression is not restricted to the cript base. Overexpressed in cancers of the ovary, colon and liver.

Its subcellular location is the cell membrane. It localises to the golgi apparatus. The protein resides in the trans-Golgi network membrane. Functionally, receptor for R-spondins that potentiates the canonical Wnt signaling pathway and acts as a stem cell marker of the intestinal epithelium and the hair follicle. Upon binding to R-spondins (RSPO1, RSPO2, RSPO3 or RSPO4), associates with phosphorylated LRP6 and frizzled receptors that are activated by extracellular Wnt receptors, triggering the canonical Wnt signaling pathway to increase expression of target genes. In contrast to classical G-protein coupled receptors, does not activate heterotrimeric G-proteins to transduce the signal. Involved in the development and/or maintenance of the adult intestinal stem cells during postembryonic development. This is Leucine-rich repeat-containing G-protein coupled receptor 5 (LGR5) from Homo sapiens (Human).